A 214-amino-acid chain; its full sequence is Cytochrome b (214 aa).

The next 4 helical transmembrane spans lie at 31–51 (FGSMLLACLMIQTITGFFLAI), 75–96 (WIMQNTXAIGASMFFICIYIHI), 111–131 (WLSGTTLLITLMATAFFGYVL), and 176–196 (FFALHFILPFIIISLSSAHIL). Heme b is bound by residues Xaa81 and His95. Residues His180 and His194 each contribute to the heme b site. Residue His199 coordinates a ubiquinone.

The protein belongs to the cytochrome b family. As to quaternary structure, the cytochrome bc1 complex contains 3 respiratory subunits (MT-CYB, CYC1 and UQCRFS1), 2 core proteins (UQCRC1 and UQCRC2) and probably 6 low-molecular weight proteins. It depends on heme b as a cofactor.

It is found in the mitochondrion inner membrane. In terms of biological role, component of the ubiquinol-cytochrome c reductase complex (complex III or cytochrome b-c1 complex) that is part of the mitochondrial respiratory chain. The b-c1 complex mediates electron transfer from ubiquinol to cytochrome c. Contributes to the generation of a proton gradient across the mitochondrial membrane that is then used for ATP synthesis. The protein is Cytochrome b (MT-CYB) of Bothriechis schlegelii (Eyelash palm pitviper).